We begin with the raw amino-acid sequence, 385 residues long: Protein pelota homolog (385 aa).

A Glycyl lysine isopeptide (Lys-Gly) (interchain with G-Cter in SUMO2) cross-link involves residue K162. S374, S380, S381, and S382 each carry phosphoserine.

It belongs to the eukaryotic release factor 1 family. Pelota subfamily. As to quaternary structure, component of the Pelota-HBS1L complex, also named Dom34-Hbs1 complex, composed of PELO and HBS1L. Interacts with PINK1. Interacts with ABCE1. Interacts with CNOT4. Requires a divalent metal cation as cofactor.

The protein localises to the cytoplasm. In terms of biological role, component of the Pelota-HBS1L complex, a complex that recognizes stalled ribosomes and triggers the No-Go Decay (NGD) pathway. In the Pelota-HBS1L complex, PELO recognizes ribosomes stalled at the 3' end of an mRNA and engages stalled ribosomes by destabilizing mRNA in the mRNA channel. Following mRNA extraction from stalled ribosomes by the SKI complex, the Pelota-HBS1L complex promotes recruitment of ABCE1, which drives the disassembly of stalled ribosomes, followed by degradation of damaged mRNAs as part of the NGD pathway. As part of the PINK1-regulated signaling, upon mitochondrial damage is recruited to the ribosome/mRNA-ribonucleoprotein complex associated to mitochondrial outer membrane thereby enabling the recruitment of autophagy receptors and induction of mitophagy. The sequence is that of Protein pelota homolog (Pelo) from Rattus norvegicus (Rat).